Here is a 562-residue protein sequence, read N- to C-terminus: Carboxylesterase 1E (562 aa).

A signal peptide spans 1–19 (MCLSALILVSLAAFTAGAG). An N-linked (GlcNAc...) asparagine glycan is attached at asparagine 80. Cysteine 88 and cysteine 117 form a disulfide bridge. Catalysis depends on serine 222, which acts as the Acyl-ester intermediate. Cysteine 274 and cysteine 285 are oxidised to a cystine. Asparagine 276 carries an N-linked (GlcNAc...) asparagine glycan. Residues glutamate 354 and histidine 467 each act as charge relay system in the active site. N-linked (GlcNAc...) asparagine glycosylation occurs at asparagine 490. A Prevents secretion from ER motif is present at residues 559–562 (HTEL).

Belongs to the type-B carboxylesterase/lipase family.

It is found in the endoplasmic reticulum lumen. It localises to the microsome membrane. It catalyses the reaction a carboxylic ester + H2O = an alcohol + a carboxylate + H(+). The catalysed reaction is all-trans-retinyl hexadecanoate + H2O = all-trans-retinol + hexadecanoate + H(+). Involved in the detoxification of xenobiotics and in the activation of ester and amide prodrugs. Hydrolyzes retinyl esters. The protein is Carboxylesterase 1E of Mus musculus (Mouse).